The chain runs to 105 residues: Heat shock protein HspQ (105 aa).

The protein belongs to the HspQ family.

The protein localises to the cytoplasm. Functionally, involved in the degradation of certain denaturated proteins, including DnaA, during heat shock stress. The sequence is that of Heat shock protein HspQ from Yersinia enterocolitica serotype O:8 / biotype 1B (strain NCTC 13174 / 8081).